The sequence spans 2282 residues: Protein Ycf2 (2282 aa).

1635 to 1642 (GSIGTGRS) is an ATP binding site.

It belongs to the Ycf2 family.

The protein localises to the plastid. It localises to the chloroplast stroma. Its function is as follows. Probable ATPase of unknown function. Its presence in a non-photosynthetic plant (Epifagus virginiana) and experiments in tobacco indicate that it has an essential function which is probably not related to photosynthesis. The sequence is that of Protein Ycf2 from Populus alba (White poplar).